Reading from the N-terminus, the 425-residue chain is Formyl-CoA:oxalate CoA-transferase (425 aa).

CoA is bound by residues 17–18, arginine 38, 72–75, 96–98, arginine 104, and 136–139; these read QS, LDTK, NFG, and KVYE. Aspartate 168 functions as the Nucleophile in the catalytic mechanism. Residue 247–249 participates in substrate binding; sequence GGQ.

It belongs to the CoA-transferase III family. Frc subfamily. As to quaternary structure, homodimer.

The catalysed reaction is formyl-CoA + oxalate = oxalyl-CoA + formate. The protein operates within metabolic intermediate degradation; oxalate degradation; CO(2) and formate from oxalate: step 1/2. In terms of biological role, involved in the catabolism of oxalate and in the adapatation to low pH via the induction of the oxalate-dependent acid tolerance response (ATR). Catalyzes the transfer of the CoA moiety from formyl-CoA to oxalate. The polypeptide is Formyl-CoA:oxalate CoA-transferase (Rhodopseudomonas palustris (strain HaA2)).